Here is a 334-residue protein sequence, read N- to C-terminus: Ornithine carbamoyltransferase (334 aa).

Residues 57-60 (STRT), R108, and 135-138 (HPTQ) each bind carbamoyl phosphate. L-ornithine-binding positions include N168, D232, and 236-237 (SM). Carbamoyl phosphate is bound by residues 274–275 (CL) and R321.

Belongs to the aspartate/ornithine carbamoyltransferase superfamily. OTCase family.

It is found in the cytoplasm. The catalysed reaction is carbamoyl phosphate + L-ornithine = L-citrulline + phosphate + H(+). It participates in amino-acid biosynthesis; L-arginine biosynthesis; L-arginine from L-ornithine and carbamoyl phosphate: step 1/3. Functionally, reversibly catalyzes the transfer of the carbamoyl group from carbamoyl phosphate (CP) to the N(epsilon) atom of ornithine (ORN) to produce L-citrulline. This Cutibacterium acnes (strain DSM 16379 / KPA171202) (Propionibacterium acnes) protein is Ornithine carbamoyltransferase.